We begin with the raw amino-acid sequence, 163 residues long: NADH-quinone oxidoreductase subunit I (163 aa).

4Fe-4S ferredoxin-type domains follow at residues 54-84 and 94-123; these read LRRYPNGEERCIACKLCEAVCPALAITIDSA and TRYDIDLFKCIFCGFCEESCPVDSIVETHI. Cys64, Cys67, Cys70, Cys74, Cys103, Cys106, Cys109, and Cys113 together coordinate [4Fe-4S] cluster.

It belongs to the complex I 23 kDa subunit family. NDH-1 is composed of 14 different subunits. Subunits NuoA, H, J, K, L, M, N constitute the membrane sector of the complex. [4Fe-4S] cluster serves as cofactor.

It localises to the cell inner membrane. It carries out the reaction a quinone + NADH + 5 H(+)(in) = a quinol + NAD(+) + 4 H(+)(out). In terms of biological role, NDH-1 shuttles electrons from NADH, via FMN and iron-sulfur (Fe-S) centers, to quinones in the respiratory chain. The immediate electron acceptor for the enzyme in this species is believed to be ubiquinone. Couples the redox reaction to proton translocation (for every two electrons transferred, four hydrogen ions are translocated across the cytoplasmic membrane), and thus conserves the redox energy in a proton gradient. The chain is NADH-quinone oxidoreductase subunit I from Xanthomonas campestris pv. campestris (strain 8004).